The sequence spans 490 residues: 4-hydroxyphenylacetaldehyde synthase (490 aa).

Residues Pro97, His198, and His313 each coordinate L-phenylalanine. Position 314 is an N6-(pyridoxal phosphate)lysine (Lys314). Phe343 contacts L-phenylalanine.

Belongs to the group II decarboxylase family. In terms of assembly, homodimer. Requires pyridoxal 5'-phosphate as cofactor.

It catalyses the reaction L-tyrosine + O2 + H2O + H(+) = (4-hydroxyphenyl)acetaldehyde + H2O2 + NH4(+) + CO2. Functionally, catalyzes the production of 4-hydroxyphenylacetaldehyde (HPAA) directly from L-tyrosine, tyramine not being formed as an intermediate. The polypeptide is 4-hydroxyphenylacetaldehyde synthase (Rhodiola rosea (Roseroot)).